Consider the following 893-residue polypeptide: Alanine--tRNA ligase (893 aa).

Residues H573, H577, C676, and H680 each contribute to the Zn(2+) site. Residues 853-872 (LGGGGGGKDDLAQGGGQDPS) are disordered.

It belongs to the class-II aminoacyl-tRNA synthetase family. The cofactor is Zn(2+).

The protein resides in the cytoplasm. It carries out the reaction tRNA(Ala) + L-alanine + ATP = L-alanyl-tRNA(Ala) + AMP + diphosphate. In terms of biological role, catalyzes the attachment of alanine to tRNA(Ala) in a two-step reaction: alanine is first activated by ATP to form Ala-AMP and then transferred to the acceptor end of tRNA(Ala). Also edits incorrectly charged Ser-tRNA(Ala) and Gly-tRNA(Ala) via its editing domain. The polypeptide is Alanine--tRNA ligase (Kineococcus radiotolerans (strain ATCC BAA-149 / DSM 14245 / SRS30216)).